Consider the following 237-residue polypeptide: Uridylate kinase (237 aa).

9-12 (KLSG) lines the ATP pocket. Gly51 serves as a coordination point for UMP. Residues Gly52 and Arg56 each coordinate ATP. Residues Asp71 and 132–139 (CGNPFFTT) each bind UMP. Residues Thr159, Tyr165, and Asp168 each coordinate ATP.

This sequence belongs to the UMP kinase family. In terms of assembly, homohexamer.

It localises to the cytoplasm. It catalyses the reaction UMP + ATP = UDP + ADP. The protein operates within pyrimidine metabolism; CTP biosynthesis via de novo pathway; UDP from UMP (UMPK route): step 1/1. Inhibited by UTP. Functionally, catalyzes the reversible phosphorylation of UMP to UDP. This is Uridylate kinase from Prochlorococcus marinus (strain NATL1A).